The sequence spans 185 residues: Guanosine deaminase (185 aa).

Positions Asp28–Phe142 constitute a CMP/dCMP-type deaminase domain. Residue His80 coordinates Zn(2+). Glu82 functions as the Proton donor in the catalytic mechanism. Zn(2+) is bound by residues Cys110 and Cys113.

This sequence belongs to the cytidine and deoxycytidylate deaminase family. As to expression, expressed in roots, leaves, flowers and siliques.

It localises to the cytoplasm. It is found in the nucleus. The enzyme catalyses guanosine + H2O + H(+) = xanthosine + NH4(+). Catalyzes the hydrolytic deamination of guanosine, producing xanthosine and ammonia. Deaminates exclusively guanosine and 2'-deoxyguanosine but no other aminated purines, pyrimidines, or pterines. Deamination of guanosine by GSDA is the only source of xanthosine production in Arabidopsis. The sequence is that of Guanosine deaminase from Arabidopsis thaliana (Mouse-ear cress).